We begin with the raw amino-acid sequence, 114 residues long: PDZK1-interacting protein 1 (114 aa).

Residues 1–28 (MSALSLVILGLLMAVPPASCQQGLGNLQ) are Extracellular-facing. Residues 29–51 (PWMQGLIAVAVFLVLVAIAFAIN) form a helical membrane-spanning segment. Over 52-114 (HFWCQEEREP…EEGRVHSTPM (63 aa)) the chain is Cytoplasmic. Ser85 carries the post-translational modification Phosphoserine. The disordered stretch occupies residues 92-114 (SNEHENAYENTSEEEGRVHSTPM). The span at 105–114 (EEGRVHSTPM) shows a compositional bias: basic and acidic residues.

The protein belongs to the PDZK1-interacting protein 1/SMIM24 family. Forms a heterodimer (via N-terminal transmembrane helix) with SLC5A2/SGLT2 (via TM13); this interaction enhances SLC5A2 transporter activity. Interacts with PDZK1.

The protein resides in the apical cell membrane. In terms of biological role, auxiliary protein of electrogenic Na(+)-coupled sugar symporter SLC5A2/SGLT2 and SLC5A1/SGLT1. Essential for the transporter activity of SLC5A2/SGLT2 but not SLC5A1/SGLT1. This Sus scrofa (Pig) protein is PDZK1-interacting protein 1.